A 341-amino-acid chain; its full sequence is Glucokinase (341 aa).

Glycine 18–threonine 23 contacts ATP.

It belongs to the bacterial glucokinase family.

It is found in the cytoplasm. The catalysed reaction is D-glucose + ATP = D-glucose 6-phosphate + ADP + H(+). This Rhizobium etli (strain CIAT 652) protein is Glucokinase.